Reading from the N-terminus, the 157-residue chain is S-ribosylhomocysteine lyase (157 aa).

H54, H58, and C126 together coordinate Fe cation.

This sequence belongs to the LuxS family. In terms of assembly, homodimer. Fe cation is required as a cofactor.

The enzyme catalyses S-(5-deoxy-D-ribos-5-yl)-L-homocysteine = (S)-4,5-dihydroxypentane-2,3-dione + L-homocysteine. Involved in the synthesis of autoinducer 2 (AI-2) which is secreted by bacteria and is used to communicate both the cell density and the metabolic potential of the environment. The regulation of gene expression in response to changes in cell density is called quorum sensing. Catalyzes the transformation of S-ribosylhomocysteine (RHC) to homocysteine (HC) and 4,5-dihydroxy-2,3-pentadione (DPD). This Bacillus pumilus (strain SAFR-032) protein is S-ribosylhomocysteine lyase.